The primary structure comprises 458 residues: Monomethylamine methyltransferase MtmB2 (458 aa).

Pyl202 is a non-standard amino acid (pyrrolysine).

It belongs to the monomethylamine methyltransferase family. In terms of assembly, can form a complex with MtmC (MtmC1 or MtmC2).

The enzyme catalyses Co(I)-[methylamine-specific corrinoid protein] + methylamine + H(+) = methyl-Co(III)-[methylamine-specific corrinoid protein] + NH4(+). The protein operates within one-carbon metabolism; methanogenesis from methylamine. In terms of biological role, catalyzes the transfer of the methyl group from monomethylamine to the corrinoid cofactor of MtmC (MtmC1 or MtmC2). In Methanosarcina barkeri, this protein is Monomethylamine methyltransferase MtmB2 (mtmB2).